Reading from the N-terminus, the 198-residue chain is Glycerol-3-phosphate acyltransferase (198 aa).

Helical transmembrane passes span 1–21 (MNLL…GYLA), 53–73 (IIVF…AKYL), 79–99 (WQVA…WLNW), 111–131 (IFLG…IIMI), 136–156 (IVSL…FLSF), and 158–178 (GSNI…LVIW).

The protein belongs to the PlsY family. In terms of assembly, probably interacts with PlsX.

It localises to the cell inner membrane. The catalysed reaction is an acyl phosphate + sn-glycerol 3-phosphate = a 1-acyl-sn-glycero-3-phosphate + phosphate. It functions in the pathway lipid metabolism; phospholipid metabolism. Its function is as follows. Catalyzes the transfer of an acyl group from acyl-phosphate (acyl-PO(4)) to glycerol-3-phosphate (G3P) to form lysophosphatidic acid (LPA). This enzyme utilizes acyl-phosphate as fatty acyl donor, but not acyl-CoA or acyl-ACP. The sequence is that of Glycerol-3-phosphate acyltransferase from Prochlorococcus marinus (strain NATL1A).